The chain runs to 61 residues: Small ribosomal subunit protein uS14B (61 aa).

Zn(2+) is bound by residues Cys24, Cys27, Cys40, and Cys43.

The protein belongs to the universal ribosomal protein uS14 family. Zinc-binding uS14 subfamily. Part of the 30S ribosomal subunit. Contacts proteins S3 and S10. Zn(2+) is required as a cofactor.

Its function is as follows. Binds 16S rRNA, required for the assembly of 30S particles and may also be responsible for determining the conformation of the 16S rRNA at the A site. The sequence is that of Small ribosomal subunit protein uS14B from Staphylococcus epidermidis (strain ATCC 35984 / DSM 28319 / BCRC 17069 / CCUG 31568 / BM 3577 / RP62A).